Here is a 152-residue protein sequence, read N- to C-terminus: Small ribosomal subunit protein bS16 (152 aa).

Residues 84–152 are disordered; the sequence is WKWEASNNPQ…EAAAEEEKSE (69 aa). Basic and acidic residues predominate over residues 97-123; that stretch reads PGQKAKELAAEKAEKEADRKAAEEEAK. Residues 124-144 show a composition bias toward low complexity; it reads AAAAAPAAEEAPAEEAPAAEA.

It belongs to the bacterial ribosomal protein bS16 family.

This is Small ribosomal subunit protein bS16 from Maricaulis maris (strain MCS10) (Caulobacter maris).